Here is a 342-residue protein sequence, read N- to C-terminus: Aquaporin-7 (342 aa).

At 1 to 36 (MVQTSRHRRSTRGSKMVSWSVMAKIQEILQKKMVRE) the chain is on the cytoplasmic side. Residue Ser-20 is modified to Phosphoserine. A helical transmembrane segment spans residues 37-54 (FLAEFMSTYVMMVFGLGS). The Extracellular portion of the chain corresponds to 55 to 67 (VAHMVLNKKYGSY). A helical membrane pass occupies residues 68-85 (LGVNLGFGFGVTMGVHVA). At 86-89 (GHIS) the chain is on the cytoplasmic side. An intramembrane region (discontinuously helical) is located at residues 90 to 103 (GAHMNAAVTFANCA). The NPA 1 motif lies at 94-96 (NAA). Over 104–111 (LGRVPWRK) the chain is Cytoplasmic. A helical membrane pass occupies residues 112-132 (FPVYVLGQFLGSFLAAATIYT). Over 133–167 (LFYTAILHFSGGQLMVTGPVATAGIFATYLPDHMT) the chain is Extracellular. A helical transmembrane segment spans residues 168–188 (LWRGFLNEAWLTGMLQLCLFA). Over 189 to 200 (ITDQENNAALPG) the chain is Cytoplasmic. Residues 201 to 217 (TQALVIGILVVIIGVSL) form a helical membrane-spanning segment. The Extracellular segment spans residues 218–221 (GMNT). Residues 222–235 (GYAINPSRDLPPRV) constitute an intramembrane region (discontinuously helical). The NPA 2 signature appears at 226 to 228 (NPS). The Extracellular portion of the chain corresponds to 236–253 (FTFIAGWGKEVFSEGENW). The chain crosses the membrane as a helical span at residues 254–275 (WWVPVVAPLLGACLGGIIYLVF). The Cytoplasmic segment spans residues 276–342 (IGSTTPREPL…LHESMALGHF (67 aa)).

This sequence belongs to the MIP/aquaporin (TC 1.A.8) family. In terms of assembly, homotetramer; each monomer provides an independent glycerol/water pore. Two homotetramers on opposing membranes can dimerize, forming a cell-cell junction. Interacts with PLIN1. In terms of processing, phosphorylation by PKA could prevent the interaction with PLIN1.

The protein resides in the cell membrane. The protein localises to the cytoplasmic vesicle membrane. Its subcellular location is the lipid droplet. It catalyses the reaction glycerol(in) = glycerol(out). The catalysed reaction is H2O(in) = H2O(out). It carries out the reaction urea(in) = urea(out). Glycerol transport is regulated by pH, with the porin being permeable to glycerol at pH 7.4 but not at pH 5.5. Water permeability, however, is not influenced by pH. Its function is as follows. Aquaglyceroporins form homotetrameric transmembrane channels, with each monomer independently mediating glycerol and water transport across the plasma membrane along their osmotic gradient. Could also be permeable to urea. Mediates the efflux of glycerol, formed upon triglyceride hydrolysis, to avoid its accumulation in adipocytes and to make it available to other tissues. In the kidney, mediates the reabsorption of glycerol, preventing its loss in urine, again participating to energy homeostasis. In pancreatic beta cells, it also mediates the efflux of glycerol, regulating its intracellular levels. In Macaca fascicularis (Crab-eating macaque), this protein is Aquaporin-7 (AQP7).